A 112-amino-acid polypeptide reads, in one-letter code: Colipase (112 aa).

The signal sequence occupies residues 1–17 (MEKVLALLLVTLTVAYA). The propeptide at 18–22 (VPDPR) is enterostatin, activation peptide. Intrachain disulfides connect Cys-34–Cys-45, Cys-40–Cys-56, Cys-44–Cys-78, Cys-66–Cys-86, and Cys-80–Cys-104.

It belongs to the colipase family. Forms a 1:1 stoichiometric complex with pancreatic lipase. As to expression, expressed by the pancreas.

It localises to the secreted. Its function is as follows. Colipase is a cofactor of pancreatic lipase. It allows the lipase to anchor itself to the lipid-water interface. Without colipase the enzyme is washed off by bile salts, which have an inhibitory effect on the lipase. Enterostatin has a biological activity as a satiety signal. The chain is Colipase (CLPS) from Sus scrofa (Pig).